Reading from the N-terminus, the 650-residue chain is Chaperone protein DnaK (650 aa).

At T200 the chain carries Phosphothreonine; by autocatalysis. Low complexity predominate over residues 611-636 (AQQAGAAGAAGAAAEGASAQGGAQPA). The segment at 611–650 (AQQAGAAGAAGAAAEGASAQGGAQPADDVVDADFKEVKKD) is disordered.

It belongs to the heat shock protein 70 family.

Its function is as follows. Acts as a chaperone. This chain is Chaperone protein DnaK, found in Burkholderia mallei (strain NCTC 10247).